A 127-amino-acid chain; its full sequence is MQIPRMSLRQLAWSGAVLLLVGTLLLAWSAVRQQESTLAIRAVHQGTTMPDGFSIWHHLDAHGIPFKSITPKNDTLLITFDSSDQSAAAKAVLDRTLPHGYIIAQQDNNSQAMQWLTRLRDNSHRFG.

Residues 1–10 (MQIPRMSLRQ) are Cytoplasmic-facing. A helical transmembrane segment spans residues 11 to 31 (LAWSGAVLLLVGTLLLAWSAV). Topologically, residues 32-127 (RQQESTLAIR…RLRDNSHRFG (96 aa)) are periplasmic.

It belongs to the MzrA family. As to quaternary structure, interacts with EnvZ.

It localises to the cell inner membrane. Its function is as follows. Modulates the activity of the EnvZ/OmpR two-component regulatory system, probably by directly modulating EnvZ enzymatic activity and increasing stability of phosphorylated OmpR. Links the two-component systems CpxA/CpxR and EnvZ/OmpR. In Escherichia coli (strain K12), this protein is Modulator protein MzrA.